A 225-amino-acid polypeptide reads, in one-letter code: 2-C-methyl-D-erythritol 4-phosphate cytidylyltransferase (225 aa).

This sequence belongs to the IspD/TarI cytidylyltransferase family. IspD subfamily.

The enzyme catalyses 2-C-methyl-D-erythritol 4-phosphate + CTP + H(+) = 4-CDP-2-C-methyl-D-erythritol + diphosphate. The protein operates within isoprenoid biosynthesis; isopentenyl diphosphate biosynthesis via DXP pathway; isopentenyl diphosphate from 1-deoxy-D-xylulose 5-phosphate: step 2/6. Its function is as follows. Catalyzes the formation of 4-diphosphocytidyl-2-C-methyl-D-erythritol from CTP and 2-C-methyl-D-erythritol 4-phosphate (MEP). The sequence is that of 2-C-methyl-D-erythritol 4-phosphate cytidylyltransferase from Clostridium perfringens (strain ATCC 13124 / DSM 756 / JCM 1290 / NCIMB 6125 / NCTC 8237 / Type A).